A 135-amino-acid chain; its full sequence is MDPVQIRSLSLEALAYLGDAVWELHVRTRVLLPPRRLQWLHGDTVACVRASAQAKLATCLSPHLTVEEADWLRRGRNAGGTVPRRLDPATYRLATAFEALLGYLFLADRDRLGVILHLCDEFQHHHGPDTPSPEA.

The active site involves Asp19.

This sequence belongs to the MrnC RNase family. As to quaternary structure, homodimer. Mg(2+) serves as cofactor.

It localises to the cytoplasm. Its function is as follows. Involved in correct processing of both the 5' and 3' ends of 23S rRNA precursor. Processes 30S rRNA precursor transcript even in absence of ribonuclease 3 (Rnc); Rnc processes 30S rRNA into smaller rRNA precursors. This Gloeobacter violaceus (strain ATCC 29082 / PCC 7421) protein is Mini-ribonuclease 3.